The primary structure comprises 188 residues: Elongation factor P (188 aa).

This sequence belongs to the elongation factor P family.

It is found in the cytoplasm. It functions in the pathway protein biosynthesis; polypeptide chain elongation. Functionally, involved in peptide bond synthesis. Stimulates efficient translation and peptide-bond synthesis on native or reconstituted 70S ribosomes in vitro. Probably functions indirectly by altering the affinity of the ribosome for aminoacyl-tRNA, thus increasing their reactivity as acceptors for peptidyl transferase. The chain is Elongation factor P from Nitrosospira multiformis (strain ATCC 25196 / NCIMB 11849 / C 71).